A 171-amino-acid polypeptide reads, in one-letter code: MHQVISATTNPAKIQAILQAFEEIFGEGSCHITPVAVESGVPEQPFGSEETRAGARNRVDNAQRLHPQADFWVAIEAGINDDATFSWVVIDNGVQRGEARSATLPLPAVILDRVRQGEALGPVMSHYTGIDEIGRKEGAIGVFTAGKLTRSSVYYQAVILALSPFHNAVYR.

Position 8–13 (8–13 (TTNPAK)) interacts with substrate. Glu-38 and Gln-68 together coordinate Mg(2+).

This sequence belongs to the YjjX NTPase family. Homodimer. The cofactor is Mg(2+). Mn(2+) serves as cofactor.

The enzyme catalyses XTP + H2O = XDP + phosphate + H(+). It carries out the reaction ITP + H2O = IDP + phosphate + H(+). Its function is as follows. Phosphatase that hydrolyzes non-canonical purine nucleotides such as XTP and ITP to their respective diphosphate derivatives. Probably excludes non-canonical purines from DNA/RNA precursor pool, thus preventing their incorporation into DNA/RNA and avoiding chromosomal lesions. In Salmonella paratyphi C (strain RKS4594), this protein is Inosine/xanthosine triphosphatase (yjjX).